The primary structure comprises 765 residues: Phosphoribosylformylglycinamidine synthase subunit PurL (765 aa).

Residues 1–13 (MTVSPTSAPTQAI) are compositionally biased toward polar residues. The interval 1-32 (MTVSPTSAPTQAIDTVERAATTPDEPQPFGEL) is disordered. Residue H65 is part of the active site. The ATP site is built by Y68 and K112. Residue E114 participates in Mg(2+) binding. Substrate-binding positions include 115–118 (SHNH) and R137. The active-site Proton acceptor is H116. A Mg(2+)-binding site is contributed by D138. A substrate-binding site is contributed by Q263. D291 serves as a coordination point for Mg(2+). 335 to 337 (ESQ) is a binding site for substrate. Positions 523 and 560 each coordinate ATP. N561 is a Mg(2+) binding site. S563 is a binding site for substrate.

This sequence belongs to the FGAMS family. Monomer. Part of the FGAM synthase complex composed of 1 PurL, 1 PurQ and 2 PurS subunits.

Its subcellular location is the cytoplasm. It carries out the reaction N(2)-formyl-N(1)-(5-phospho-beta-D-ribosyl)glycinamide + L-glutamine + ATP + H2O = 2-formamido-N(1)-(5-O-phospho-beta-D-ribosyl)acetamidine + L-glutamate + ADP + phosphate + H(+). The protein operates within purine metabolism; IMP biosynthesis via de novo pathway; 5-amino-1-(5-phospho-D-ribosyl)imidazole from N(2)-formyl-N(1)-(5-phospho-D-ribosyl)glycinamide: step 1/2. Part of the phosphoribosylformylglycinamidine synthase complex involved in the purines biosynthetic pathway. Catalyzes the ATP-dependent conversion of formylglycinamide ribonucleotide (FGAR) and glutamine to yield formylglycinamidine ribonucleotide (FGAM) and glutamate. The FGAM synthase complex is composed of three subunits. PurQ produces an ammonia molecule by converting glutamine to glutamate. PurL transfers the ammonia molecule to FGAR to form FGAM in an ATP-dependent manner. PurS interacts with PurQ and PurL and is thought to assist in the transfer of the ammonia molecule from PurQ to PurL. This Mycolicibacterium paratuberculosis (strain ATCC BAA-968 / K-10) (Mycobacterium paratuberculosis) protein is Phosphoribosylformylglycinamidine synthase subunit PurL.